Reading from the N-terminus, the 142-residue chain is Biogenesis of lysosome-related organelles complex 1 subunit 2 (142 aa).

The segment at 1 to 33 is disordered; that stretch reads MAAAAEGVLATRSDEPARDDAAVETAEEAKEPA. N-acetylalanine is present on Ala2. Basic and acidic residues predominate over residues 12-33; sequence RSDEPARDDAAVETAEEAKEPA. A coiled-coil region spans residues 79–127; sequence EMKDIAINISRNLKDLNQKYAGLQPYLDQINVIEEQVAALEQAAYKLDA.

It belongs to the BLOC1S2 family. In terms of assembly, component of the biogenesis of lysosome-related organelles complex 1 (BLOC-1) composed of BLOC1S1, BLOC1S2, BLOC1S3, BLOC1S4, BLOC1S5, BLOC1S6, DTNBP1/BLOC1S7 and SNAPIN/BLOC1S8. Octamer composed of one copy each BLOC1S1, BLOC1S2, BLOC1S3, BLOC1S4, BLOC1S5, BLOC1S6, DTNBP1/BLOC1S7 and SNAPIN/BLOC1S8. Interacts directly with BLOC1S1, BLOC1S3, BLOC1S4, BLOC1S5 and SNAPIN. The BLOC-1 complex associates with the AP-3 protein complex and membrane protein cargos. Component of the BLOC-one-related complex (BORC) which is composed of BLOC1S1, BLOC1S2, BORCS5, BORCS6, BORCS7, BORCS8, KXD1 and SNAPIN. Interacts with gamma-tubulin. Interacts with IFT57. As to expression, isoform 1 and isoform 2 are widely expressed. Expressed in various malignant tumor tissues (at protein level).

It localises to the cytoplasm. It is found in the cytoskeleton. Its subcellular location is the microtubule organizing center. The protein localises to the centrosome. The protein resides in the lysosome membrane. Component of the BLOC-1 complex, a complex that is required for normal biogenesis of lysosome-related organelles (LRO), such as platelet dense granules and melanosomes. In concert with the AP-3 complex, the BLOC-1 complex is required to target membrane protein cargos into vesicles assembled at cell bodies for delivery into neurites and nerve terminals. The BLOC-1 complex, in association with SNARE proteins, is also proposed to be involved in neurite extension. As part of the BORC complex may play a role in lysosomes movement and localization at the cell periphery. Associated with the cytosolic face of lysosomes, the BORC complex may recruit ARL8B and couple lysosomes to microtubule plus-end-directed kinesin motor. May play a role in cell proliferation. The polypeptide is Biogenesis of lysosome-related organelles complex 1 subunit 2 (BLOC1S2) (Homo sapiens (Human)).